We begin with the raw amino-acid sequence, 387 residues long: MKKKILLLGSGELGKEFIIAAQRLGQYVIAVDFYDGAPAMQVAHEKEIINMLDGNLLDQVVKKHKPDLIVPEIEAIRTERFYEYEKQGYQIVPSAKAANFTMNRKSIRDLAAKDLKLLTAKYLYASSEKELAKATKILGFPCVVKPLMSSSGKGQSIIKSPKDISKAWEASQTKGRTSATEIIVEEFISFKSEITLLTVTQKNGKTLFCPPIGHRQERGDYQESWQPAEISEVQLKEAQRMAEAVTKELTGFGIWGVEFFLTEDQVYFSELSPRPHDTGMVTLSGTQNFNEFELHIRAILGIPIPEVTQERKGASAVILASTDGKIPEVRGLDIASEMPESDFRIFGKPITRPYRRMGIALSYSTKGEGISSLRKRAILLASKIKVD.

N(1)-(5-phospho-beta-D-ribosyl)glycinamide is bound by residues 12-13 and Glu-72; that span reads EL. ATP contacts are provided by residues Arg-104, Lys-145, 150–155, 185–188, and Glu-193; these read SSGKGQ and EEFI. Positions 109 to 300 constitute an ATP-grasp domain; the sequence is DLAAKDLKLL…EFELHIRAIL (192 aa). Mg(2+)-binding residues include Glu-258 and Glu-270. N(1)-(5-phospho-beta-D-ribosyl)glycinamide is bound by residues Asp-277, Lys-348, and 355–356; that span reads RR.

Belongs to the PurK/PurT family. Homodimer.

The catalysed reaction is N(1)-(5-phospho-beta-D-ribosyl)glycinamide + formate + ATP = N(2)-formyl-N(1)-(5-phospho-beta-D-ribosyl)glycinamide + ADP + phosphate + H(+). It participates in purine metabolism; IMP biosynthesis via de novo pathway; N(2)-formyl-N(1)-(5-phospho-D-ribosyl)glycinamide from N(1)-(5-phospho-D-ribosyl)glycinamide (formate route): step 1/1. Its function is as follows. Involved in the de novo purine biosynthesis. Catalyzes the transfer of formate to 5-phospho-ribosyl-glycinamide (GAR), producing 5-phospho-ribosyl-N-formylglycinamide (FGAR). Formate is provided by PurU via hydrolysis of 10-formyl-tetrahydrofolate. The protein is Formate-dependent phosphoribosylglycinamide formyltransferase of Leptospira borgpetersenii serovar Hardjo-bovis (strain JB197).